Consider the following 500-residue polypeptide: Probable cytosol aminopeptidase (500 aa).

Positions 261 and 266 each coordinate Mn(2+). Residue K273 is part of the active site. Mn(2+)-binding residues include D284, D343, and E345. R347 is a catalytic residue.

It belongs to the peptidase M17 family. The cofactor is Mn(2+).

The protein localises to the cytoplasm. It carries out the reaction Release of an N-terminal amino acid, Xaa-|-Yaa-, in which Xaa is preferably Leu, but may be other amino acids including Pro although not Arg or Lys, and Yaa may be Pro. Amino acid amides and methyl esters are also readily hydrolyzed, but rates on arylamides are exceedingly low.. The enzyme catalyses Release of an N-terminal amino acid, preferentially leucine, but not glutamic or aspartic acids.. Its function is as follows. Presumably involved in the processing and regular turnover of intracellular proteins. Catalyzes the removal of unsubstituted N-terminal amino acids from various peptides. The polypeptide is Probable cytosol aminopeptidase (pepA) (Bacillus subtilis (strain 168)).